A 668-amino-acid chain; its full sequence is tRNA 5-methylaminomethyl-2-thiouridine biosynthesis bifunctional protein MnmC (668 aa).

The tract at residues 1–245 (MKHYSIQPAN…KREMLCGVME (245 aa)) is tRNA (mnm(5)s(2)U34)-methyltransferase. The interval 270–668 (IGGGIASALL…LLKGKAVKAG (399 aa)) is FAD-dependent cmnm(5)s(2)U34 oxidoreductase.

This sequence in the N-terminal section; belongs to the methyltransferase superfamily. tRNA (mnm(5)s(2)U34)-methyltransferase family. The protein in the C-terminal section; belongs to the DAO family. FAD is required as a cofactor.

It localises to the cytoplasm. The catalysed reaction is 5-aminomethyl-2-thiouridine(34) in tRNA + S-adenosyl-L-methionine = 5-methylaminomethyl-2-thiouridine(34) in tRNA + S-adenosyl-L-homocysteine + H(+). In terms of biological role, catalyzes the last two steps in the biosynthesis of 5-methylaminomethyl-2-thiouridine (mnm(5)s(2)U) at the wobble position (U34) in tRNA. Catalyzes the FAD-dependent demodification of cmnm(5)s(2)U34 to nm(5)s(2)U34, followed by the transfer of a methyl group from S-adenosyl-L-methionine to nm(5)s(2)U34, to form mnm(5)s(2)U34. The chain is tRNA 5-methylaminomethyl-2-thiouridine biosynthesis bifunctional protein MnmC from Shigella flexneri serotype 5b (strain 8401).